The primary structure comprises 37 residues: Large ribosomal subunit protein bL36 (37 aa).

Belongs to the bacterial ribosomal protein bL36 family.

The chain is Large ribosomal subunit protein bL36 from Gloeothece citriformis (strain PCC 7424) (Cyanothece sp. (strain PCC 7424)).